We begin with the raw amino-acid sequence, 210 residues long: Pyridoxine/pyridoxamine 5'-phosphate oxidase (210 aa).

Substrate-binding positions include 7–10 and Lys65; that span reads RDEY. Residues 60-65, 75-76, Arg81, Lys82, and Gln104 each bind FMN; these read RMVLLK and FT. Tyr122, Arg126, and Ser130 together coordinate substrate. FMN is bound by residues 139–140 and Trp183; that span reads QS. Residue 189 to 191 participates in substrate binding; the sequence is RLH. Residue Arg193 coordinates FMN.

Belongs to the pyridoxamine 5'-phosphate oxidase family. In terms of assembly, homodimer. Requires FMN as cofactor.

The enzyme catalyses pyridoxamine 5'-phosphate + O2 + H2O = pyridoxal 5'-phosphate + H2O2 + NH4(+). The catalysed reaction is pyridoxine 5'-phosphate + O2 = pyridoxal 5'-phosphate + H2O2. Its pathway is cofactor metabolism; pyridoxal 5'-phosphate salvage; pyridoxal 5'-phosphate from pyridoxamine 5'-phosphate: step 1/1. The protein operates within cofactor metabolism; pyridoxal 5'-phosphate salvage; pyridoxal 5'-phosphate from pyridoxine 5'-phosphate: step 1/1. Functionally, catalyzes the oxidation of either pyridoxine 5'-phosphate (PNP) or pyridoxamine 5'-phosphate (PMP) into pyridoxal 5'-phosphate (PLP). This is Pyridoxine/pyridoxamine 5'-phosphate oxidase from Haemophilus influenzae (strain 86-028NP).